The following is a 614-amino-acid chain: BPI fold-containing family B member 4 (614 aa).

The first 18 residues, 1–18 (MWMAWCVAALSVVAVCGT), serve as a signal peptide directing secretion. A glycan (N-linked (GlcNAc...) asparagine) is linked at Asn273. A disulfide bond links Cys295 and Cys332.

This sequence belongs to the BPI/LBP/Plunc superfamily. BPI/LBP family. Expressed in nasal tissue.

It is found in the secreted. The protein localises to the cytoplasm. Functionally, may have the capacity to recognize and bind specific classes of odorants. May act as a carrier molecule, transporting odorants across the mucus layer to access receptor sites. May serve as a primary defense mechanism by recognizing and removing potentially harmful odorants or pathogenic microorganisms from the mucosa or clearing excess odorant from mucus to enable new odorant stimuli to be received. The sequence is that of BPI fold-containing family B member 4 (BPIFB4) from Homo sapiens (Human).